The sequence spans 194 residues: ATP-dependent Clp protease proteolytic subunit (194 aa).

Catalysis depends on S97, which acts as the Nucleophile. H122 is a catalytic residue.

Belongs to the peptidase S14 family. In terms of assembly, fourteen ClpP subunits assemble into 2 heptameric rings which stack back to back to give a disk-like structure with a central cavity, resembling the structure of eukaryotic proteasomes.

Its subcellular location is the cytoplasm. The catalysed reaction is Hydrolysis of proteins to small peptides in the presence of ATP and magnesium. alpha-casein is the usual test substrate. In the absence of ATP, only oligopeptides shorter than five residues are hydrolyzed (such as succinyl-Leu-Tyr-|-NHMec, and Leu-Tyr-Leu-|-Tyr-Trp, in which cleavage of the -Tyr-|-Leu- and -Tyr-|-Trp bonds also occurs).. Cleaves peptides in various proteins in a process that requires ATP hydrolysis. Has a chymotrypsin-like activity. Plays a major role in the degradation of misfolded proteins. This chain is ATP-dependent Clp protease proteolytic subunit, found in Thermus thermophilus (strain ATCC BAA-163 / DSM 7039 / HB27).